A 155-amino-acid polypeptide reads, in one-letter code: Arginine repressor (155 aa).

The protein belongs to the ArgR family.

The protein localises to the cytoplasm. Its pathway is amino-acid biosynthesis; L-arginine biosynthesis [regulation]. Its function is as follows. Regulates arginine biosynthesis genes. This is Arginine repressor from Histophilus somni (strain 129Pt) (Haemophilus somnus).